We begin with the raw amino-acid sequence, 216 residues long: Large ribosomal subunit protein uL3 (216 aa).

Positions 135-156 (LGASHGTQRKHRSPGSIGGCAT) are disordered.

Belongs to the universal ribosomal protein uL3 family. In terms of assembly, part of the 50S ribosomal subunit. Forms a cluster with proteins L14 and L19.

In terms of biological role, one of the primary rRNA binding proteins, it binds directly near the 3'-end of the 23S rRNA, where it nucleates assembly of the 50S subunit. The protein is Large ribosomal subunit protein uL3 of Thermobifida fusca (strain YX).